The primary structure comprises 548 residues: Chaperonin GroEL (548 aa).

ATP is bound by residues Thr-30–Pro-33, Lys-51, Asp-87–Thr-91, Gly-415, Asn-479–Ala-481, and Asp-495.

It belongs to the chaperonin (HSP60) family. In terms of assembly, forms a cylinder of 14 subunits composed of two heptameric rings stacked back-to-back. Interacts with the co-chaperonin GroES.

It is found in the cytoplasm. The enzyme catalyses ATP + H2O + a folded polypeptide = ADP + phosphate + an unfolded polypeptide.. In terms of biological role, together with its co-chaperonin GroES, plays an essential role in assisting protein folding. The GroEL-GroES system forms a nano-cage that allows encapsulation of the non-native substrate proteins and provides a physical environment optimized to promote and accelerate protein folding. This is Chaperonin GroEL from Vibrio campbellii (strain ATCC BAA-1116).